Consider the following 32-residue polypeptide: Toxic phospholipase A2 (32 aa).

It belongs to the phospholipase A2 family. Group III subfamily. The cofactor is Ca(2+).

It is found in the secreted. The protein resides in the nematocyst. The catalysed reaction is a 1,2-diacyl-sn-glycero-3-phosphocholine + H2O = a 1-acyl-sn-glycero-3-phosphocholine + a fatty acid + H(+). PLA2 catalyzes the calcium-dependent hydrolysis of the 2-acyl groups in 3-sn-phosphoglycerides. The chain is Toxic phospholipase A2 from Rhopilema nomadica (Mediteranean medusa).